The following is an 87-amino-acid chain: Small ribosomal subunit protein bS18 (87 aa).

This sequence belongs to the bacterial ribosomal protein bS18 family. As to quaternary structure, part of the 30S ribosomal subunit. Forms a tight heterodimer with protein bS6.

Its function is as follows. Binds as a heterodimer with protein bS6 to the central domain of the 16S rRNA, where it helps stabilize the platform of the 30S subunit. The protein is Small ribosomal subunit protein bS18 of Nitratidesulfovibrio vulgaris (strain ATCC 29579 / DSM 644 / CCUG 34227 / NCIMB 8303 / VKM B-1760 / Hildenborough) (Desulfovibrio vulgaris).